The chain runs to 266 residues: Glutamate racemase (266 aa).

Residues 9–10 (DS) and 41–42 (YG) contribute to the substrate site. Cys-73 acts as the Proton donor/acceptor in catalysis. 74–75 (NS) lines the substrate pocket. Residue Cys-183 is the Proton donor/acceptor of the active site. 184–185 (TH) contacts substrate.

It belongs to the aspartate/glutamate racemases family.

The catalysed reaction is L-glutamate = D-glutamate. The protein operates within cell wall biogenesis; peptidoglycan biosynthesis. Functionally, provides the (R)-glutamate required for cell wall biosynthesis. The chain is Glutamate racemase from Shewanella loihica (strain ATCC BAA-1088 / PV-4).